The chain runs to 291 residues: Undecaprenyl-diphosphatase (291 aa).

8 consecutive transmembrane segments (helical) span residues 1–21, 48–68, 102–122, 126–146, 162–182, 203–223, 231–251, and 267–287; these read MFII…LTEF, SAFT…AWVF, LHVL…DDFI, LFSV…MIIA, ISYF…WPGF, SDFT…LSLL, IADI…GLIA, and FAIY…GFGI.

Belongs to the UppP family.

The protein resides in the cell membrane. It catalyses the reaction di-trans,octa-cis-undecaprenyl diphosphate + H2O = di-trans,octa-cis-undecaprenyl phosphate + phosphate + H(+). Catalyzes the dephosphorylation of undecaprenyl diphosphate (UPP). Confers resistance to bacitracin. The protein is Undecaprenyl-diphosphatase of Staphylococcus aureus (strain COL).